A 378-amino-acid polypeptide reads, in one-letter code: Erythronate-4-phosphate dehydrogenase (378 aa).

2 residues coordinate substrate: serine 45 and threonine 66. NAD(+)-binding residues include aspartate 146 and threonine 175. Arginine 208 is a catalytic residue. Aspartate 232 is a binding site for NAD(+). The active site involves glutamate 237. Histidine 254 serves as the catalytic Proton donor. An NAD(+)-binding site is contributed by glycine 257. Tyrosine 258 is a substrate binding site.

Belongs to the D-isomer specific 2-hydroxyacid dehydrogenase family. PdxB subfamily. Homodimer.

The protein resides in the cytoplasm. It carries out the reaction 4-phospho-D-erythronate + NAD(+) = (R)-3-hydroxy-2-oxo-4-phosphooxybutanoate + NADH + H(+). Its pathway is cofactor biosynthesis; pyridoxine 5'-phosphate biosynthesis; pyridoxine 5'-phosphate from D-erythrose 4-phosphate: step 2/5. In terms of biological role, catalyzes the oxidation of erythronate-4-phosphate to 3-hydroxy-2-oxo-4-phosphonooxybutanoate. The protein is Erythronate-4-phosphate dehydrogenase of Salmonella agona (strain SL483).